Here is a 157-residue protein sequence, read N- to C-terminus: Epithelial membrane protein 1 (157 aa).

Residues methionine 1–valine 21 traverse the membrane as a helical segment. 2 N-linked (GlcNAc...) asparagine glycosylation sites follow: asparagine 43 and asparagine 46. The next 3 membrane-spanning stretches (helical) occupy residues phenylalanine 67–phenylalanine 87, phenylalanine 95–isoleucine 115, and tyrosine 134–leucine 154.

It belongs to the PMP-22/EMP/MP20 family.

It is found in the membrane. In Homo sapiens (Human), this protein is Epithelial membrane protein 1 (EMP1).